Reading from the N-terminus, the 224-residue chain is Transmembrane protein C16orf54 (224 aa).

O-linked (GalNAc...) threonine glycosylation is present at T4. A helical transmembrane segment spans residues 32-52 (IPIMLVLATLAALFILTTAVL). 2 disordered regions span residues 104 to 138 (TDRA…SNLG) and 152 to 203 (WGPQ…GLQP). Phosphothreonine is present on residues T112 and T116. Position 194 is a phosphoserine (S194).

In terms of processing, O-glycosylated with core 1 or possibly core 8 glycans.

Its subcellular location is the membrane. In Homo sapiens (Human), this protein is Transmembrane protein C16orf54 (C16orf54).